The following is a 326-amino-acid chain: Tetraacyldisaccharide 4'-kinase (326 aa).

55 to 62 (TVGGNGKT) contributes to the ATP binding site.

The protein belongs to the LpxK family.

The enzyme catalyses a lipid A disaccharide + ATP = a lipid IVA + ADP + H(+). It functions in the pathway glycolipid biosynthesis; lipid IV(A) biosynthesis; lipid IV(A) from (3R)-3-hydroxytetradecanoyl-[acyl-carrier-protein] and UDP-N-acetyl-alpha-D-glucosamine: step 6/6. Its function is as follows. Transfers the gamma-phosphate of ATP to the 4'-position of a tetraacyldisaccharide 1-phosphate intermediate (termed DS-1-P) to form tetraacyldisaccharide 1,4'-bis-phosphate (lipid IVA). In Tolumonas auensis (strain DSM 9187 / NBRC 110442 / TA 4), this protein is Tetraacyldisaccharide 4'-kinase.